Here is a 595-residue protein sequence, read N- to C-terminus: MKGLRGHNKKSFWGNTRLSDLLWPVTLLPGLISAYQPVYLGSRQSSPFLPPQIPLGDSPPLSDTHEFTLRHIFHRGTYQDPDLHRRLDITPDTRLRAVSDAGIESDVVTPNTPLVASSQPLIIERLADRRLSVIEEHLVTARSSGSAVALSPSDWVMDTLPGPNVTEKKTVVALAMMTANDYIEVPGTGDWQDIHGRFNHSGSFGWQGDGLRGHVYADKTNSTVVISLKGTSPALFDGEGTTTNDKINDNLFFSCCCGQGGSYLWRQVCDCQTTLYNANLTCIVEAMLDENRYYRASLDLYSNITEMYPNANVWLTGHSLGGAVSSLLGLTFGVPVVTFEAVPEALPAARLGLPSPPGHDSRYPQSRRNTGSYHFGHTADPVYMGTCNGVSSVCTWGGYAMESACHTGQMCVYDTVEDKGWRVGLSKHRINYVIANVLAGYDDVPPCAPEEECYDCELWKFFRSNGSEITTTTSATSTSTSTTTSRTSTCKTPGWWGCLDQTTTTETTSTSTSTSTCKTPGWFGCKDPTTTSDITSVPTITTTEPPMTSTTTCKTPGWFGCKDETTTQVIAPAATLTITEPPVTSTTTGKHLGRF.

The Cytoplasmic segment spans residues 1-20 (MKGLRGHNKKSFWGNTRLSD). The helical; Signal-anchor for type II membrane protein transmembrane segment at 21 to 41 (LLWPVTLLPGLISAYQPVYLG) threads the bilayer. The Lumenal segment spans residues 42 to 595 (SRQSSPFLPP…TTTGKHLGRF (554 aa)). N-linked (GlcNAc...) asparagine glycosylation is found at asparagine 164, asparagine 199, asparagine 221, asparagine 279, and asparagine 303. The Charge relay system role is filled by serine 319. An N-linked (GlcNAc...) asparagine glycan is attached at asparagine 465.

The protein belongs to the AB hydrolase superfamily. Lipase family. Binds to both phosphatidylinositol (PI) and phosphatidylinositol 3,5-bisphosphate (PIP2).

The protein localises to the endosome. Its subcellular location is the multivesicular body membrane. It localises to the prevacuolar compartment membrane. The enzyme catalyses a triacylglycerol + H2O = a diacylglycerol + a fatty acid + H(+). Its function is as follows. Lipase which is essential for lysis of subvacuolar cytoplasm to vacuole targeted bodies and intravacuolar autophagic bodies. Involved in the lysis of intravacuolar multivesicular body (MVB) vesicles. The intravacuolar membrane disintegration by atg15 is critical to life span extension. In Aspergillus niger (strain ATCC MYA-4892 / CBS 513.88 / FGSC A1513), this protein is Putative lipase atg15 (atg15).